Here is a 265-residue protein sequence, read N- to C-terminus: Adenosylcobinamide-GDP ribazoletransferase (265 aa).

4 helical membrane passes run 51 to 71, 72 to 92, 121 to 140, and 203 to 223; these read LVGV…QLIF, PDSV…GAFH, IGTY…FVLW, and VASL…LFAF.

This sequence belongs to the CobS family. Mg(2+) serves as cofactor.

The protein resides in the cell inner membrane. The catalysed reaction is alpha-ribazole + adenosylcob(III)inamide-GDP = adenosylcob(III)alamin + GMP + H(+). The enzyme catalyses alpha-ribazole 5'-phosphate + adenosylcob(III)inamide-GDP = adenosylcob(III)alamin 5'-phosphate + GMP + H(+). Its pathway is cofactor biosynthesis; adenosylcobalamin biosynthesis; adenosylcobalamin from cob(II)yrinate a,c-diamide: step 7/7. Its function is as follows. Joins adenosylcobinamide-GDP and alpha-ribazole to generate adenosylcobalamin (Ado-cobalamin). Also synthesizes adenosylcobalamin 5'-phosphate from adenosylcobinamide-GDP and alpha-ribazole 5'-phosphate. This is Adenosylcobinamide-GDP ribazoletransferase from Vibrio parahaemolyticus serotype O3:K6 (strain RIMD 2210633).